The following is a 127-amino-acid chain: EF-hand calcium-binding domain-containing protein 10 (127 aa).

The region spanning 63 to 98 is the EF-hand domain; that stretch reads MDNSNIVAMFEMMDSSGRGTISFVQYKEALKTLGLC.

This is EF-hand calcium-binding domain-containing protein 10 (EFCAB10) from Homo sapiens (Human).